Reading from the N-terminus, the 303-residue chain is Dihydroorotate dehydrogenase B (NAD(+)), catalytic subunit (303 aa).

FMN contacts are provided by residues serine 21 and 45–46 (KG). Substrate is bound by residues lysine 45 and 69–73 (NSIGL). Residues asparagine 99 and asparagine 127 each contribute to the FMN site. Asparagine 127 lines the substrate pocket. Cysteine 130 acts as the Nucleophile in catalysis. 2 residues coordinate FMN: lysine 165 and isoleucine 191. 192–193 (NT) is a substrate binding site. Residues glycine 217, 243-244 (GG), and 265-266 (GT) each bind FMN.

The protein belongs to the dihydroorotate dehydrogenase family. Type 1 subfamily. Heterotetramer of 2 PyrK and 2 PyrD type B subunits. The cofactor is FMN.

It localises to the cytoplasm. The enzyme catalyses (S)-dihydroorotate + NAD(+) = orotate + NADH + H(+). It functions in the pathway pyrimidine metabolism; UMP biosynthesis via de novo pathway; orotate from (S)-dihydroorotate (NAD(+) route): step 1/1. In terms of biological role, catalyzes the conversion of dihydroorotate to orotate with NAD(+) as electron acceptor. This Thermodesulfovibrio yellowstonii (strain ATCC 51303 / DSM 11347 / YP87) protein is Dihydroorotate dehydrogenase B (NAD(+)), catalytic subunit (pyrD).